Reading from the N-terminus, the 138-residue chain is Ostreolysin A6 (138 aa).

Belongs to the aegerolysin family. In terms of assembly, monomer.

In terms of biological role, has hemolytic activity against bovine erythrocytes at nanomolar concentrations in vitro. Promotes active pleurotolysin B (PlyB)-dependent permeabilization of membranes rich in cholesterol and sphingomyelin. May play an important role in the initial phase of fungal fruiting. The sequence is that of Ostreolysin A6 (OlyA6) from Pleurotus ostreatus (Oyster mushroom).